A 221-amino-acid chain; its full sequence is Mediator of RNA polymerase II transcription subunit 19a (221 aa).

The disordered stretch occupies residues 101 to 221; sequence PVELPPAEKG…DEVGAIRVAG (121 aa). Positions 142-152 are enriched in basic residues; that stretch reads EHKKHKHKHKD. Residues 153 to 178 are compositionally biased toward basic and acidic residues; that stretch reads RSKDKDKDKDRDRKKDKNGHHDSGDH. Residues 179-188 show a composition bias toward basic residues; sequence SKKHHDKKRK.

This sequence belongs to the plant Mediator complex subunit 19 family. In terms of assembly, component of the Mediator complex. Interacts with FIB2.

It is found in the nucleus. Functionally, component of the Mediator complex, a coactivator involved in the regulated transcription of nearly all RNA polymerase II-dependent genes. Mediator functions as a bridge to convey information from gene-specific regulatory proteins to the basal RNA polymerase II transcription machinery. The Mediator complex, having a compact conformation in its free form, is recruited to promoters by direct interactions with regulatory proteins and serves for the assembly of a functional preinitiation complex with RNA polymerase II and the general transcription factors. The sequence is that of Mediator of RNA polymerase II transcription subunit 19a (MED19A) from Arabidopsis thaliana (Mouse-ear cress).